Consider the following 729-residue polypeptide: MLFNSVLRQPQLGVLRNGWSSHYPLQSLLSGYQCNCNDEHTSYGETGVPVPPFGCTFCTAPSMEHILAVANEEGFVRLYNTESQTSKKTCFKEWMAHWNAVFDLAWVPGELKLVTAAGDQTAKFWDVRAGELMGTCKGHQCSLKSVAFPKFQKAVFSTGGRDGNIMIWDTRCNKKDGFYRQVNQISGAHNTADKQTPSKPKKKQNSKGLAPAVDSQQSVTVVLFQDENTLVSAGAVDGIIKVWDLRKNYTAYRQEPIASKSFLYPGTSTRKLGYSSLVLDSTGSTLFANCTDDNIYMFNMTGLKTSPVAVFNGHQNSTFYVKSSLSPDDQFLISGSSDEAAYIWKVSMPWHPPTVLLGHSQEVTSVCWCPSDFTKIATCSDDNTLKIWRLNRGLEEKPGDKHSIVGWTSQKKKEVKACPVTVPSSQSTPAKAPRAKSSPSISSPSSAACTPSCAGDLPLPSSTPTFSVKTTPATTRSSVSRRGSISSVSPKPLSSFKMSLRNWVTRTPSSSPPVTPPASETKISSPRKALIPVSQKSSQADACSESRNRVKRRLDSSCLESVKQKCVKSCNCVTELDGQAESLRLDLCCLSGTQEVLSQDSEGPTKSSKTEGAGTSISEPPSPVSPYASEGCGPLPLPLRPCGEGSEMVGKENSSPENKNWLLAIAAKRKAENSSPRSPSSQTPSSRRQSGKTSPGPVTITPSSMRKICTYFRRKTQDDFCSPEHSTEL.

Met1 carries the N-acetylmethionine modification. 3 WD repeats span residues 47–89, 96–135, and 138–178; these read GVPV…SKKT, AHWN…LMGT, and GHQC…KDGF. The DDB1-binding motif motif lies at 168-171; the sequence is WDTR. A compositionally biased stretch (polar residues) spans 189-198; the sequence is HNTADKQTPS. The segment at 189–212 is disordered; sequence HNTADKQTPSKPKKKQNSKGLAPA. Thr196 is modified (phosphothreonine). The Nuclear localization signal motif lies at 197–203; that stretch reads PSKPKKK. WD repeat units lie at residues 214–253, 269–308, 313–354, and 358–398; these read DSQQ…TAYR, TRKL…TSPV, GHQN…HPPT, and GHSQ…EEKP. Residues 243-246 carry the DDB1-binding motif motif; that stretch reads WDLR. Residues Ser409 and Ser425 each carry the phosphoserine modification. Disordered stretches follow at residues 416 to 445 and 460 to 491; these read KACP…SSPS and PSST…VSPK. Over residues 427-445 the composition is skewed to low complexity; sequence STPAKAPRAKSSPSISSPS. Polar residues predominate over residues 460–475; it reads PSSTPTFSVKTTPATT. Residue Thr463 is modified to Phosphothreonine; by CDK1 and CDK2. The span at 476-491 shows a compositional bias: low complexity; that stretch reads RSSVSRRGSISSVSPK. Phosphoserine occurs at positions 484, 489, 494, and 511. Positions 504-546 are disordered; sequence VTRTPSSSPPVTPPASETKISSPRKALIPVSQKSSQADACSES. Thr515 carries the phosphothreonine modification. Ser556 carries the post-translational modification Phosphoserine. Polar residues predominate over residues 596 to 607; the sequence is VLSQDSEGPTKS. Positions 596–705 are disordered; sequence VLSQDSEGPT…GPVTITPSSM (110 aa). Composition is skewed to low complexity over residues 630–645 and 674–688; these read EGCG…CGEG and SSPR…SSRR. Residues Ser675 and Ser678 each carry the phosphoserine modification. Thr683 and Thr701 each carry phosphothreonine.

It belongs to the WD repeat cdt2 family. Component of the DCX(DTL) E3 ubiquitin ligase complex (also called CRL4(CDT2)), at least composed of CUL4 (CUL4A or CUL4B), DDB1, DTL/CDT2 and RBX1. Interacts with CDKN1A and DDB1. Interacts with FBXO11; SCF(FBXWO11) controls DTL stability but DCX(DTL) does not control FBXO11 stability. Interacts with CRY1. Post-translationally, ubiquitinated by the anaphase promoting complex/cyclosome (APC/C). Autoubiquitinated through 'Lys-48'-polyubiquitin chains in a PCNA-independent reaction, allowing proteasomal turnover. Polyubiquitinated by SCF(FBXO11) when not phosphorylated, leading to its degradation. A tight regulation of the polyubiquitination by SCF(FBXO11) is involved in the control of different processes such as TGF-beta signaling, cell cycle progression and exit. In terms of processing, phosphorylated at Thr-463 by CDK1/Cyclin B and CDK2/Cycnlin A but not by CDK2/Cyclin E, MAPK1 or PLK1. Phosphorylation at Thr-463 inhibits the interaction with FBXO11 and decreases upon cell cycle exit induced by TGF-beta or serum starvation.

It localises to the nucleus. It is found in the nucleus membrane. Its subcellular location is the cytoplasm. The protein localises to the cytoskeleton. The protein resides in the microtubule organizing center. It localises to the centrosome. It is found in the chromosome. It participates in protein modification; protein ubiquitination. Functionally, substrate-specific adapter of a DCX (DDB1-CUL4-X-box) E3 ubiquitin-protein ligase complex required for cell cycle control, DNA damage response and translesion DNA synthesis. The DCX(DTL) complex, also named CRL4(CDT2) complex, mediates the polyubiquitination and subsequent degradation of CDT1, CDKN1A/p21(CIP1), FBH1, KMT5A and SDE2. CDT1 degradation in response to DNA damage is necessary to ensure proper cell cycle regulation of DNA replication. CDKN1A/p21(CIP1) degradation during S phase or following UV irradiation is essential to control replication licensing. KMT5A degradation is also important for a proper regulation of mechanisms such as TGF-beta signaling, cell cycle progression, DNA repair and cell migration. Most substrates require their interaction with PCNA for their polyubiquitination: substrates interact with PCNA via their PIP-box, and those containing the 'K+4' motif in the PIP box, recruit the DCX(DTL) complex, leading to their degradation. In undamaged proliferating cells, the DCX(DTL) complex also promotes the 'Lys-164' monoubiquitination of PCNA, thereby being involved in PCNA-dependent translesion DNA synthesis. The DDB1-CUL4A-DTL E3 ligase complex regulates the circadian clock function by mediating the ubiquitination and degradation of CRY1. The chain is Denticleless protein homolog (Dtl) from Mus musculus (Mouse).